The following is a 610-amino-acid chain: Major facilitator superfamily multidrug transporter FLU1 (610 aa).

Asparagine 3 and asparagine 21 each carry an N-linked (GlcNAc...) asparagine glycan. The span at 47–58 (GPTDSVESSSNT) shows a compositional bias: polar residues. Positions 47–74 (GPTDSVESSSNTADEENEINSFNAQNVK) are disordered. Transmembrane regions (helical) follow at residues 165–185 (ILYC…SAMF), 209–229 (LFVF…ELFG), 231–251 (KLVM…VATA), 262–282 (FFAG…MADM), 292–312 (IAIF…LGAF), 323–343 (WTSY…TFLL), 408–428 (AFIY…FLGE), 437–457 (ELPY…IMLF), 478–498 (LEPM…LGWT), 507–527 (WIVP…IFLP), and 530–550 (NYII…NTFI). N-linked (GlcNAc...) asparagine glycosylation occurs at asparagine 568. A helical membrane pass occupies residues 573 to 593 (WASTLLGCIGILLLPMPFVFY).

It belongs to the major facilitator superfamily. DHA1 family. Polyamines/proton antiporter (TC 2.A.1.2.16) subfamily.

It localises to the cell membrane. Major facilitator superfamily transporter that mediates resistance to structurally and functionally unrelated compounds including cycloheximide but also azoles such as fuconazole, ketoconazole and itraconazole. Also mediates efflux of histatin 5, a salivary human antimicrobial peptide, and is responsible for reduction of its toxicity in C.albicans. The protein is Major facilitator superfamily multidrug transporter FLU1 of Candida albicans (strain SC5314 / ATCC MYA-2876) (Yeast).